Here is a 505-residue protein sequence, read N- to C-terminus: MSEYILEMRNITKEFPGVKALDNVNFKVKRGEIHALVGENGAGKSTLMKILSGVYPYGTYKGDIIIDGEVKQFRNIKDSEKSGIAIIYQELTLVKYMTVGENIFLGEEPVKGGIIDWMKVYSETYRLLKELQINVNPYTKVMNLGIGHQQMVEIAKALSKKARILILDEPTSALTESETEHLLNILKDLKKNGVTCIYISHKLNEVFEIADSITVLRDGKTIMTDKKENFTENKVISLMVGRELTQRFPRAKHTPGEVVFEVKNYTVYDHEIPGKKIIDNVSFKARRGEILGIAGLMGAGRTELAASIFGAFKGRKEGEIYLNGKKIEINTPSDAIKHGIAYLSEDRKRFGLVTLMDVQENIALPNYDRLSKFSIINNNAKIKHAEKYVKELKIKTPTIRQRVANLSGGNQQKVVIAKWLMSDPKVLILDEPTRGIDVGAKFEIYNLMNKLVDMGVCVIMISSELPEILGMSDRILVIHEGKINGEFPIEEADQEKIMYCATGGK.

ABC transporter domains are found at residues 6-243 and 262-505; these read LEMR…VGRE and VKNY…TGGK. Position 38 to 45 (38 to 45) interacts with ATP; it reads GENGAGKS.

The protein belongs to the ABC transporter superfamily. Xylose importer (TC 3.A.1.2.4) family. As to quaternary structure, the complex is composed of two ATP-binding proteins (XylG), two transmembrane proteins (XylH) and a solute-binding protein (XylF).

It is found in the cell membrane. It carries out the reaction D-xylose(out) + ATP + H2O = D-xylose(in) + ADP + phosphate + H(+). In terms of biological role, part of the ABC transporter complex XylFGH involved in xylose import. Responsible for energy coupling to the transport system. This chain is Xylose import ATP-binding protein XylG, found in Thermoanaerobacter pseudethanolicus (strain ATCC 33223 / 39E) (Clostridium thermohydrosulfuricum).